The chain runs to 460 residues: MQKRELGKSGGNSGGSSGPPAKRGRPFGSTSANSAAAAAAAAAADAMSPSALLGPSLLVHNSFVEQNNRRIVLALQSGLKSEVTWALNTLTLLSFKEKEDIRRDVMPLAKIAGLLDALLLIIDDWRDIALPKDLTRGTRVRTLGTNASVTGFGNEYDALASIQPPGSGIGSSAAEALGKKSTGKHQSSQWWMEEDGLFNLDDEGRSEKQMCAIAASNVIRNFSFMPDNEVVMAQHRHCLETVFQCIHDHMTEDEELVTNSLETIVNLAHLMDLRIFSSLKQSYININEKKAVQAVVGILNSSVKAWNCAAAELLGRLIINPDNEPFISPLIPQIHKRLIDLLSIQAVDAQAAAVGALYNLVEVNMDCRLKLASERWAVDRLLKVIKTPHPVPEVCRKAAMILENLVSEPQNRGLLLAYENAFAELLFQEGKYSDSFARILYELTARSNSRVASARGIWGM.

The interval 1–30 (MQKRELGKSGGNSGGSSGPPAKRGRPFGST) is disordered. Over residues 8 to 17 (KSGGNSGGSS) the composition is skewed to gly residues. 3 ARM repeats span residues 227-269 (DNEV…NLAH), 323-362 (NEPFISPLIPQIHKRLIDLLSIQAVDAQAAAVGALYNLVE), and 366-407 (DCRL…NLVS).

In terms of assembly, interacts with AS2. As to expression, expressed in roots, leaves, stems and flowers.

The protein resides in the nucleus. Its function is as follows. Involved in leaf and flower development. Plays roles in leaf development partly by associating with AS2 and repressing KNAT1/BP transcription. Required for the formation of anther cell layers and normal expression of genes that regulates anther development. The chain is Armadillo repeat-containing protein LFR from Arabidopsis thaliana (Mouse-ear cress).